Here is a 61-residue protein sequence, read N- to C-terminus: UPF0434 protein PSPTO_3844 (61 aa).

It belongs to the UPF0434 family.

This Pseudomonas syringae pv. tomato (strain ATCC BAA-871 / DC3000) protein is UPF0434 protein PSPTO_3844.